We begin with the raw amino-acid sequence, 178 residues long: Ribosome maturation factor RimP (178 aa).

Belongs to the RimP family.

The protein resides in the cytoplasm. Its function is as follows. Required for maturation of 30S ribosomal subunits. The sequence is that of Ribosome maturation factor RimP from Mycolicibacterium paratuberculosis (strain ATCC BAA-968 / K-10) (Mycobacterium paratuberculosis).